Here is a 72-residue protein sequence, read N- to C-terminus: Protein SlyX (72 aa).

Belongs to the SlyX family.

In Cronobacter sakazakii (strain ATCC BAA-894) (Enterobacter sakazakii), this protein is Protein SlyX.